A 377-amino-acid chain; its full sequence is tRNA/tmRNA (uracil-C(5))-methyltransferase (377 aa).

S-adenosyl-L-methionine-binding residues include Gln199, Tyr227, Asn232, Glu248, and Asp308. Cys333 serves as the catalytic Nucleophile. The active-site Proton acceptor is Glu367.

The protein belongs to the class I-like SAM-binding methyltransferase superfamily. RNA M5U methyltransferase family. TrmA subfamily.

It carries out the reaction uridine(54) in tRNA + S-adenosyl-L-methionine = 5-methyluridine(54) in tRNA + S-adenosyl-L-homocysteine + H(+). The enzyme catalyses uridine(341) in tmRNA + S-adenosyl-L-methionine = 5-methyluridine(341) in tmRNA + S-adenosyl-L-homocysteine + H(+). Its function is as follows. Dual-specificity methyltransferase that catalyzes the formation of 5-methyluridine at position 54 (m5U54) in all tRNAs, and that of position 341 (m5U341) in tmRNA (transfer-mRNA). The protein is tRNA/tmRNA (uracil-C(5))-methyltransferase of Aeromonas hydrophila subsp. hydrophila (strain ATCC 7966 / DSM 30187 / BCRC 13018 / CCUG 14551 / JCM 1027 / KCTC 2358 / NCIMB 9240 / NCTC 8049).